A 232-amino-acid chain; its full sequence is 7-cyano-7-deazaguanine synthase 2 (232 aa).

Residue 9 to 19 (FSGGQDSTTCL) coordinates ATP. Residues cysteine 189, cysteine 198, cysteine 201, and cysteine 204 each contribute to the Zn(2+) site.

Belongs to the QueC family. It depends on Zn(2+) as a cofactor.

It catalyses the reaction 7-carboxy-7-deazaguanine + NH4(+) + ATP = 7-cyano-7-deazaguanine + ADP + phosphate + H2O + H(+). It functions in the pathway purine metabolism; 7-cyano-7-deazaguanine biosynthesis. Its function is as follows. Catalyzes the ATP-dependent conversion of 7-carboxy-7-deazaguanine (CDG) to 7-cyano-7-deazaguanine (preQ(0)). The polypeptide is 7-cyano-7-deazaguanine synthase 2 (Pseudomonas fluorescens (strain ATCC BAA-477 / NRRL B-23932 / Pf-5)).